The following is a 292-amino-acid chain: ATP synthase gamma chain (292 aa).

The protein belongs to the ATPase gamma chain family. In terms of assembly, F-type ATPases have 2 components, CF(1) - the catalytic core - and CF(0) - the membrane proton channel. CF(1) has five subunits: alpha(3), beta(3), gamma(1), delta(1), epsilon(1). CF(0) has three main subunits: a, b and c.

It is found in the cell inner membrane. Its function is as follows. Produces ATP from ADP in the presence of a proton gradient across the membrane. The gamma chain is believed to be important in regulating ATPase activity and the flow of protons through the CF(0) complex. The protein is ATP synthase gamma chain of Brucella anthropi (strain ATCC 49188 / DSM 6882 / CCUG 24695 / JCM 21032 / LMG 3331 / NBRC 15819 / NCTC 12168 / Alc 37) (Ochrobactrum anthropi).